Reading from the N-terminus, the 281-residue chain is NADPH-dependent 7-cyano-7-deazaguanine reductase (281 aa).

87-89 provides a ligand contact to substrate; sequence IES. NADPH is bound at residue 89 to 90; sequence SK. C188 (thioimide intermediate) is an active-site residue. D195 functions as the Proton donor in the catalytic mechanism. 227–228 is a binding site for substrate; sequence HE. Position 256 to 257 (256 to 257) interacts with NADPH; the sequence is RG. Residues 261–281 are disordered; sequence INPYRSTEQDKPAHNHRMARQ.

The protein belongs to the GTP cyclohydrolase I family. QueF type 2 subfamily. Homodimer.

It is found in the cytoplasm. The catalysed reaction is 7-aminomethyl-7-carbaguanine + 2 NADP(+) = 7-cyano-7-deazaguanine + 2 NADPH + 3 H(+). It participates in tRNA modification; tRNA-queuosine biosynthesis. In terms of biological role, catalyzes the NADPH-dependent reduction of 7-cyano-7-deazaguanine (preQ0) to 7-aminomethyl-7-deazaguanine (preQ1). The sequence is that of NADPH-dependent 7-cyano-7-deazaguanine reductase from Vibrio parahaemolyticus serotype O3:K6 (strain RIMD 2210633).